The following is a 308-amino-acid chain: F420-non-reducing hydrogenase subunit G (308 aa).

The protein belongs to the [NiFe]/[NiFeSe] hydrogenase small subunit family. As to quaternary structure, the F420-non-reducing hydrogenase is composed of three subunits; MvhA, MvhD and MvhG. It forms a complex with the heterodisulfide reductase (hdr).

Part of a complex that provides reducing equivalents for heterodisulfide reductase. This is F420-non-reducing hydrogenase subunit G (mvhG) from Methanothermobacter thermautotrophicus (strain ATCC 29096 / DSM 1053 / JCM 10044 / NBRC 100330 / Delta H) (Methanobacterium thermoautotrophicum).